The sequence spans 117 residues: Large ribosomal subunit protein bL19 (117 aa).

It belongs to the bacterial ribosomal protein bL19 family.

This protein is located at the 30S-50S ribosomal subunit interface and may play a role in the structure and function of the aminoacyl-tRNA binding site. In Exiguobacterium sp. (strain ATCC BAA-1283 / AT1b), this protein is Large ribosomal subunit protein bL19.